The chain runs to 98 residues: MTSINLNLTVAFSLALAGVLIYRSHLMSTLLCLEGMMLSLFVMMALLISHFHMFSTSMAPIILLVFSACEAGVGLALLVKTSNNYGNDYVQNLNLLQC.

3 consecutive transmembrane segments (helical) span residues 1-21 (MTSINLNLTVAFSLALAGVLI), 28-48 (STLLCLEGMMLSLFVMMALLI), and 59-79 (APIILLVFSACEAGVGLALLV).

It belongs to the complex I subunit 4L family. In terms of assembly, core subunit of respiratory chain NADH dehydrogenase (Complex I) which is composed of 45 different subunits.

Its subcellular location is the mitochondrion inner membrane. It carries out the reaction a ubiquinone + NADH + 5 H(+)(in) = a ubiquinol + NAD(+) + 4 H(+)(out). Functionally, core subunit of the mitochondrial membrane respiratory chain NADH dehydrogenase (Complex I) which catalyzes electron transfer from NADH through the respiratory chain, using ubiquinone as an electron acceptor. Part of the enzyme membrane arm which is embedded in the lipid bilayer and involved in proton translocation. The protein is NADH-ubiquinone oxidoreductase chain 4L (MT-ND4L) of Trichosurus vulpecula (Brush-tailed possum).